The chain runs to 844 residues: SWI/SNF-related matrix-associated actin-dependent regulator of chromatin subfamily A containing DEAD/H box 1 homolog (844 aa).

A compositionally biased stretch (low complexity) spans 1 to 23 (MSDSTVAASASASASSSAKSSLS). 2 disordered regions span residues 1 to 75 (MSDS…TKLE) and 121 to 180 (NCKP…STKM). Over residues 30–42 (INKNASSVVASPS) the composition is skewed to polar residues. The region spanning 301 to 471 (TVMHKQEMNG…ISLLCFVMPK (171 aa)) is the Helicase ATP-binding domain. 314–321 (DEMGLGKT) provides a ligand contact to ATP. The DEGH box signature appears at 422–425 (DEAH). Residues 656 to 818 (YLDTLLPKLK…EQRCVVKLLT (163 aa)) enclose the Helicase C-terminal domain. Serine 834, serine 838, and serine 841 each carry phosphoserine.

It belongs to the SNF2/RAD54 helicase family.

Its subcellular location is the nucleus. It carries out the reaction ATP + H2O = ADP + phosphate + H(+). DNA helicase that possesses intrinsic ATP-dependent nucleosome-remodeling activity and is both required for DNA repair and heterochromatin organization. Promotes DNA end resection of double-strand breaks (DSBs) following DNA damage: probably acts by weakening histone DNA interactions in nucleosomes flanking DSBs. The sequence is that of SWI/SNF-related matrix-associated actin-dependent regulator of chromatin subfamily A containing DEAD/H box 1 homolog (Etl1) from Drosophila melanogaster (Fruit fly).